The primary structure comprises 130 residues: MIGQWNNGTGRRKSSVARVFLKKGSGKITINGKDIQSYFGRETSIMIARQPLALTNHVETFDIRINVYGGGESGQAGAARHGITRALIDYDAALKPALSQAGFVTRDAREVERKKVGLHSARRAKQFSKR.

It belongs to the universal ribosomal protein uS9 family.

The polypeptide is Small ribosomal subunit protein uS9 (Verminephrobacter eiseniae (strain EF01-2)).